The chain runs to 119 residues: Divalent-cation tolerance protein CutA (119 aa).

The Cu cation site is built by C23, H90, and H91.

Belongs to the CutA family. As to quaternary structure, homotrimer. It depends on Cu cation as a cofactor.

It localises to the cytoplasm. In terms of biological role, involved in resistance toward heavy metals. The protein is Divalent-cation tolerance protein CutA of Yersinia pseudotuberculosis serotype O:1b (strain IP 31758).